The primary structure comprises 141 residues: Large ribosomal subunit protein uL11 (141 aa).

It belongs to the universal ribosomal protein uL11 family. As to quaternary structure, part of the ribosomal stalk of the 50S ribosomal subunit. Interacts with L10 and the large rRNA to form the base of the stalk. L10 forms an elongated spine to which L12 dimers bind in a sequential fashion forming a multimeric L10(L12)X complex. One or more lysine residues are methylated.

Its function is as follows. Forms part of the ribosomal stalk which helps the ribosome interact with GTP-bound translation factors. In Synechococcus sp. (strain ATCC 27144 / PCC 6301 / SAUG 1402/1) (Anacystis nidulans), this protein is Large ribosomal subunit protein uL11.